The following is a 156-amino-acid chain: MLPEPYRLHHRADFSRTVRRGQRIGRRDLVVHAFVHTYDELAHATERHGDPVAAGSFVRVGGPRFGLIVSKAVGSAVVRHRVARRLRHMCATLVDEVPADADVVIRALPGAATADSAELARQVRSGLRKLGVTPGGGRSPAPRAHSGARPRTDARS.

The tract at residues 126–156 (GLRKLGVTPGGGRSPAPRAHSGARPRTDARS) is disordered.

This sequence belongs to the RnpA family. Consists of a catalytic RNA component (M1 or rnpB) and a protein subunit.

It catalyses the reaction Endonucleolytic cleavage of RNA, removing 5'-extranucleotides from tRNA precursor.. Functionally, RNaseP catalyzes the removal of the 5'-leader sequence from pre-tRNA to produce the mature 5'-terminus. It can also cleave other RNA substrates such as 4.5S RNA. The protein component plays an auxiliary but essential role in vivo by binding to the 5'-leader sequence and broadening the substrate specificity of the ribozyme. In Nocardia farcinica (strain IFM 10152), this protein is Ribonuclease P protein component.